Here is a 149-residue protein sequence, read N- to C-terminus: Large ribosomal subunit protein bL9 (149 aa).

This sequence belongs to the bacterial ribosomal protein bL9 family.

In terms of biological role, binds to the 23S rRNA. This chain is Large ribosomal subunit protein bL9, found in Fervidobacterium nodosum (strain ATCC 35602 / DSM 5306 / Rt17-B1).